The primary structure comprises 510 residues: GMP synthase [glutamine-hydrolyzing] (510 aa).

The Glutamine amidotransferase type-1 domain occupies 5–195; it reads LVLVVDFGGQ…LFNVCNLKGD (191 aa). The active-site Nucleophile is the C82. Residues H169 and E171 contribute to the active site. The GMPS ATP-PPase domain maps to 196-385; sequence WSMSSFAEQQ…LGIPHKLVWR (190 aa). An ATP-binding site is contributed by 223–229; that stretch reads SGGVDSS.

In terms of assembly, homodimer.

The enzyme catalyses XMP + L-glutamine + ATP + H2O = GMP + L-glutamate + AMP + diphosphate + 2 H(+). Its pathway is purine metabolism; GMP biosynthesis; GMP from XMP (L-Gln route): step 1/1. Catalyzes the synthesis of GMP from XMP. The polypeptide is GMP synthase [glutamine-hydrolyzing] (Clostridium botulinum (strain Okra / Type B1)).